Consider the following 140-residue polypeptide: Putative nickel-responsive regulator 2 (140 aa).

4 residues coordinate Ni(2+): His77, His88, His90, and Cys96.

This sequence belongs to the transcriptional regulatory CopG/NikR family. Ni(2+) serves as cofactor.

Functionally, transcriptional regulator. This chain is Putative nickel-responsive regulator 2, found in Methanothermobacter thermautotrophicus (strain ATCC 29096 / DSM 1053 / JCM 10044 / NBRC 100330 / Delta H) (Methanobacterium thermoautotrophicum).